The following is a 317-amino-acid chain: Prenyl transferase paxC (317 aa).

Substrate-binding residues include K53 and H86. The Mg(2+) site is built by D93 and D97. 6 residues coordinate substrate: R102, K186, T187, Q216, N223, and K233.

Belongs to the FPP/GGPP synthase family.

The protein operates within secondary metabolite biosynthesis. Functionally, prenyl transferase; part of the gene cluster that mediates the biosynthesis of paxalline, a mycotoxin that acts as an inhibitor of mammalian maxi-K channels. PaxG, the geranylgeranyl diphosphate (GGPP) synthase is proposed to catalyze the first step in paxilline biosynthesis. Condensation of indole-3-glycerol phosphate with GGPP by paxC then forms 3-geranylgeranylindole (3-GGI), followed by epoxidation and cyclization of this intermediate (by paxM and paxB) to form paspaline. Paspaline is subsequently converted to 13-desoxypaxilline by paxP, the latter being then converted to paxilline by paxQ. Finally paxilline can be mono- and di-prenylated by paxD. The sequence is that of Prenyl transferase paxC from Penicillium paxilli.